A 607-amino-acid polypeptide reads, in one-letter code: Chaperone protein DnaK (607 aa).

Thr-174 is subject to Phosphothreonine; by autocatalysis. Over residues 577–594 (QSAGSTAGNPGQGQSTEN) the composition is skewed to polar residues. A disordered region spans residues 577–607 (QSAGSTAGNPGQGQSTENPGGKTIDGDYKVN).

The protein belongs to the heat shock protein 70 family.

In terms of biological role, acts as a chaperone. The polypeptide is Chaperone protein DnaK (Dictyoglomus turgidum (strain DSM 6724 / Z-1310)).